We begin with the raw amino-acid sequence, 226 residues long: 2-C-methyl-D-erythritol 4-phosphate cytidylyltransferase (226 aa).

The protein belongs to the IspD/TarI cytidylyltransferase family. IspD subfamily.

It catalyses the reaction 2-C-methyl-D-erythritol 4-phosphate + CTP + H(+) = 4-CDP-2-C-methyl-D-erythritol + diphosphate. The protein operates within isoprenoid biosynthesis; isopentenyl diphosphate biosynthesis via DXP pathway; isopentenyl diphosphate from 1-deoxy-D-xylulose 5-phosphate: step 2/6. Catalyzes the formation of 4-diphosphocytidyl-2-C-methyl-D-erythritol from CTP and 2-C-methyl-D-erythritol 4-phosphate (MEP). In Clostridium beijerinckii (strain ATCC 51743 / NCIMB 8052) (Clostridium acetobutylicum), this protein is 2-C-methyl-D-erythritol 4-phosphate cytidylyltransferase.